The primary structure comprises 101 residues: Urease subunit beta (101 aa).

Belongs to the urease beta subunit family. As to quaternary structure, heterotrimer of UreA (gamma), UreB (beta) and UreC (alpha) subunits. Three heterotrimers associate to form the active enzyme.

It is found in the cytoplasm. The catalysed reaction is urea + 2 H2O + H(+) = hydrogencarbonate + 2 NH4(+). It participates in nitrogen metabolism; urea degradation; CO(2) and NH(3) from urea (urease route): step 1/1. The sequence is that of Urease subunit beta from Rhizobium etli (strain CIAT 652).